A 196-amino-acid chain; its full sequence is NADPH:quinone oxidoreductase (196 aa).

This sequence belongs to the SsuE family. In terms of assembly, homotetramer. It depends on FMN as a cofactor.

Its subcellular location is the cell membrane. It catalyses the reaction a quinone + NADH + H(+) = a quinol + NAD(+). The enzyme catalyses a quinone + NADPH + H(+) = a quinol + NADP(+). Its function is as follows. The enzyme apparently serves as a quinone reductase in connection with conjugation reactions of hydroquinones involved in detoxification pathways. This is NADPH:quinone oxidoreductase (NQR) from Arabidopsis thaliana (Mouse-ear cress).